A 206-amino-acid chain; its full sequence is Large ribosomal subunit protein uL4 (206 aa).

The tract at residues 63–93 (MYKQKGTGRARHHSARAPQFRGGGKAHGPVV) is disordered. The segment covering 64–77 (YKQKGTGRARHHSA) has biased composition (basic residues).

Belongs to the universal ribosomal protein uL4 family. In terms of assembly, part of the 50S ribosomal subunit.

One of the primary rRNA binding proteins, this protein initially binds near the 5'-end of the 23S rRNA. It is important during the early stages of 50S assembly. It makes multiple contacts with different domains of the 23S rRNA in the assembled 50S subunit and ribosome. Its function is as follows. Forms part of the polypeptide exit tunnel. The sequence is that of Large ribosomal subunit protein uL4 from Sinorhizobium medicae (strain WSM419) (Ensifer medicae).